Consider the following 610-residue polypeptide: Putative protein tag-250 (610 aa).

Tudor domains follow at residues 149-260 and 386-506; these read VALK…LLPP and MPMS…KIGG.

The polypeptide is Putative protein tag-250 (tag-250) (Caenorhabditis elegans).